The primary structure comprises 279 residues: uncharacterized protein (279 aa).

This sequence to M.tuberculosis Rv2569c.

This is an uncharacterized protein from Mycobacterium leprae (strain TN).